The primary structure comprises 677 residues: Mitochondrial disaggregase (677 aa).

Residues 1–28 constitute a mitochondrion transit peptide; sequence MLGSLVSKRTAPAPRLLLQLLRSPSLRS. The tract at residues 92 to 126 is autoinhibitory; it reads PSPEDTLPGQDSWNGVLSRAGLGVWALATALVVHC. ANK repeat units follow at residues 133 to 162, 166 to 195, 235 to 265, and 268 to 297; these read SKDA…DVNA, LGWT…DPNL, KGCT…PLQR, and MGHT…EKQR. Positions 316, 318, 353, 354, 355, 356, 357, 358, 425, and 466 each coordinate ATP. The segment at 477-505 is regulatory; slows ATPase and disaggregase activities; the sequence is LQLRQEALEMSRNRIAENLGDVQISDKIT. Residue R531 participates in ATP binding. K559 carries the N6-acetyllysine modification. R590 is an ATP binding site.

It belongs to the ClpA/ClpB family. As to quaternary structure, homododecamer when substrate-bound; the homododecamer consists of 2 homohexamers stacked head-to-head via ANK repeat-mediated interactions. The active substrate-bound form is likely to exist in a dynamic equilibrium between homohexamers and homododecamers. Homotetradecamer in the unbound state which is remodeled upon substrate binding into the homododecamer. Interacts with PHB and PHB2. Interacts with MAVS; the interaction is enhanced by Sendai virus infection. Post-translationally, proteolytically cleaved by protease PARL. ATP-dependent protein disaggregase activity is stimulated by PARL-mediated cleavage of the N-terminal autoinhibitory peptide.

It is found in the mitochondrion intermembrane space. It catalyses the reaction ATP + H2O = ADP + phosphate + H(+). With respect to regulation, disaggregase activity is inhibited by ADP. Its function is as follows. Functions as a regulatory ATPase and participates in secretion/protein trafficking process. Has ATP-dependent protein disaggregase activity and is required to maintain the solubility of key mitochondrial proteins. Involved in mitochondrial-mediated antiviral innate immunity, activates RIG-I-mediated signal transduction and production of IFNB1 and pro-inflammatory cytokine IL6. Plays a role in granulocyte differentiation. In Bos taurus (Bovine), this protein is Mitochondrial disaggregase.